A 182-amino-acid chain; its full sequence is MPLDVALKKKYYDEVRPELIRRFGYQNIWEVPRLEKVVINQGLGEAKEDARILEKASKELALIAGQKPAITRAKKSISNFKLRKGMPIGLRVTLRGDRMWIFLEKLLSVALPRIRDFRGLNPNSFDGRGNYNLGLKEQLIFPEITYDMVDVPRGMDIAVVTTAKTDEEAKALLELLGFPFRK.

This sequence belongs to the universal ribosomal protein uL5 family. In terms of assembly, part of the 50S ribosomal subunit; part of the 5S rRNA/L5/L18/L25 subcomplex. Contacts the 5S rRNA and the P site tRNA. Forms a bridge to the 30S subunit in the 70S ribosome.

Functionally, this is one of the proteins that bind and probably mediate the attachment of the 5S RNA into the large ribosomal subunit, where it forms part of the central protuberance. In the 70S ribosome it contacts protein S13 of the 30S subunit (bridge B1b), connecting the 2 subunits; this bridge is implicated in subunit movement. Contacts the P site tRNA; the 5S rRNA and some of its associated proteins might help stabilize positioning of ribosome-bound tRNAs. In Thermus aquaticus, this protein is Large ribosomal subunit protein uL5.